We begin with the raw amino-acid sequence, 153 residues long: NAD(P)H-quinone oxidoreductase subunit N (153 aa).

The protein belongs to the complex I NdhN subunit family. NDH-1 can be composed of about 15 different subunits; different subcomplexes with different compositions have been identified which probably have different functions.

The protein localises to the cellular thylakoid membrane. The enzyme catalyses a plastoquinone + NADH + (n+1) H(+)(in) = a plastoquinol + NAD(+) + n H(+)(out). It catalyses the reaction a plastoquinone + NADPH + (n+1) H(+)(in) = a plastoquinol + NADP(+) + n H(+)(out). Functionally, NDH-1 shuttles electrons from an unknown electron donor, via FMN and iron-sulfur (Fe-S) centers, to quinones in the respiratory and/or the photosynthetic chain. The immediate electron acceptor for the enzyme in this species is believed to be plastoquinone. Couples the redox reaction to proton translocation, and thus conserves the redox energy in a proton gradient. Cyanobacterial NDH-1 also plays a role in inorganic carbon-concentration. This is NAD(P)H-quinone oxidoreductase subunit N from Synechococcus sp. (strain WH7803).